Here is a 219-residue protein sequence, read N- to C-terminus: Glucagon-2 (219 aa).

An N-terminal signal peptide occupies residues Met-1–Gln-20. 5 propeptides span residues Ser-21 to Val-50, Ser-84 to Glu-95, Asn-136 to Glu-140, Ile-175 to Ser-178, and Lys-213 to His-219. Positions Val-23–Asp-43 are disordered.

It belongs to the glucagon family.

It is found in the secreted. Promotes hydrolysis of glycogen and lipids, and raises the blood sugar level. This chain is Glucagon-2 (gcg2), found in Xenopus laevis (African clawed frog).